Consider the following 234-residue polypeptide: Glutathione S-transferase U16 (234 aa).

Residues 5–85 (EEVKLLGVWY…YIDETWNSSA (81 aa)) form the GST N-terminal domain. Residues 15-16 (SP), 42-43 (SK), 56-57 (KV), and 69-70 (ES) contribute to the glutathione site. In terms of domain architecture, GST C-terminal spans 92 to 219 (HPYDRALARF…APEIEKVAEF (128 aa)).

Belongs to the GST superfamily. Tau family.

The protein resides in the cytoplasm. The protein localises to the cytosol. It carries out the reaction RX + glutathione = an S-substituted glutathione + a halide anion + H(+). Functionally, may be involved in the conjugation of reduced glutathione to a wide number of exogenous and endogenous hydrophobic electrophiles and have a detoxification role against certain herbicides. This chain is Glutathione S-transferase U16 (GSTU16), found in Arabidopsis thaliana (Mouse-ear cress).